A 242-amino-acid polypeptide reads, in one-letter code: Small ribosomal subunit protein uS3 (242 aa).

The KH type-2 domain maps to 39 to 110 (IRKFIHKKYG…QVRINVVEVE (72 aa)). The interval 221 to 242 (GASPRRRASRRPQQFEDRSNEG) is disordered. A compositionally biased stretch (basic and acidic residues) spans 233–242 (QQFEDRSNEG).

The protein belongs to the universal ribosomal protein uS3 family. In terms of assembly, part of the 30S ribosomal subunit. Forms a tight complex with proteins S10 and S14.

In terms of biological role, binds the lower part of the 30S subunit head. Binds mRNA in the 70S ribosome, positioning it for translation. In Parasynechococcus marenigrum (strain WH8102), this protein is Small ribosomal subunit protein uS3.